A 1041-amino-acid chain; its full sequence is Histone deacetylase complex subunit SAP130-B (1041 aa).

Disordered stretches follow at residues 1-62 (MSSQ…QEPV), 111-131 (KSTM…SAVP), 572-592 (TNQG…EPKS), 614-769 (TPAG…PSGA), and 806-852 (VLAN…DEER). Polar residues predominate over residues 18-30 (VSNSGASVGQNVQ). Over residues 33–42 (EVAREIDVQS) the composition is skewed to basic and acidic residues. Residues 576–592 (VQTSSVSSQQASSEPKS) are compositionally biased toward low complexity. Residues 614 to 641 (TPAGTTVMQSHSQSPGIGSSPAQGSSPR) are compositionally biased toward polar residues. Residues 707–728 (PGAADQPSAAASLPSSHHPTAA) show a composition bias toward low complexity.

Belongs to the SAP130 family.

The protein localises to the nucleus. Acts as a transcriptional repressor. This is Histone deacetylase complex subunit SAP130-B (sap130-b) from Xenopus laevis (African clawed frog).